Reading from the N-terminus, the 260-residue chain is Putative sgc region transcriptional regulator (260 aa).

The 57-residue stretch at R5–F61 folds into the HTH deoR-type domain. The H-T-H motif DNA-binding region spans L22–D41.

In terms of biological role, putative transcriptional regulator for the sgcREAQCX region. The sequence is that of Putative sgc region transcriptional regulator (sgcR) from Escherichia coli (strain K12).